The primary structure comprises 506 residues: Cytochrome P450 52B1 (506 aa).

Cys-451 serves as a coordination point for heme.

This sequence belongs to the cytochrome P450 family. It depends on heme as a cofactor.

Its function is as follows. Together with an NADPH cytochrome P450 the enzyme system catalyzes the terminal hydroxylation as the first step in the assimilation of alkanes and fatty acids. This is Cytochrome P450 52B1 (CYP52B1) from Candida tropicalis (Yeast).